Here is a 477-residue protein sequence, read N- to C-terminus: Bifunctional protein HldE (477 aa).

Positions 1–318 are ribokinase; it reads MKVTLPEFER…ENAVRGRADT (318 aa). Lys179 is modified (N6-acetyllysine). 195-198 contacts ATP; the sequence is NLSE. The active site involves Asp264. The segment at 344 to 477 is cytidylyltransferase; that stretch reads MTNGVFDILH…IKKIQQDKKG (134 aa).

This sequence in the N-terminal section; belongs to the carbohydrate kinase PfkB family. In the C-terminal section; belongs to the cytidylyltransferase family. Homodimer.

The catalysed reaction is D-glycero-beta-D-manno-heptose 7-phosphate + ATP = D-glycero-beta-D-manno-heptose 1,7-bisphosphate + ADP + H(+). It carries out the reaction D-glycero-beta-D-manno-heptose 1-phosphate + ATP + H(+) = ADP-D-glycero-beta-D-manno-heptose + diphosphate. It participates in nucleotide-sugar biosynthesis; ADP-L-glycero-beta-D-manno-heptose biosynthesis; ADP-L-glycero-beta-D-manno-heptose from D-glycero-beta-D-manno-heptose 7-phosphate: step 1/4. It functions in the pathway nucleotide-sugar biosynthesis; ADP-L-glycero-beta-D-manno-heptose biosynthesis; ADP-L-glycero-beta-D-manno-heptose from D-glycero-beta-D-manno-heptose 7-phosphate: step 3/4. Functionally, catalyzes the phosphorylation of D-glycero-D-manno-heptose 7-phosphate at the C-1 position to selectively form D-glycero-beta-D-manno-heptose-1,7-bisphosphate. In terms of biological role, catalyzes the ADP transfer from ATP to D-glycero-beta-D-manno-heptose 1-phosphate, yielding ADP-D-glycero-beta-D-manno-heptose. The chain is Bifunctional protein HldE from Escherichia coli O17:K52:H18 (strain UMN026 / ExPEC).